We begin with the raw amino-acid sequence, 133 residues long: Large ribosomal subunit protein bL21 (133 aa).

Residues 1-22 form a disordered region; sequence MAEKPAAKPKAAAAKAEAKDQS.

This sequence belongs to the bacterial ribosomal protein bL21 family. As to quaternary structure, part of the 50S ribosomal subunit. Contacts protein L20.

Functionally, this protein binds to 23S rRNA in the presence of protein L20. The protein is Large ribosomal subunit protein bL21 of Prochlorococcus marinus (strain MIT 9303).